Consider the following 383-residue polypeptide: BRISC and BRCA1-A complex member 2 (383 aa).

Met1 is subject to N-acetylmethionine. Residue Ser2 is modified to Phosphoserine. UEV-like regions lie at residues 30 to 147 and 275 to 364; these read DATN…TLLE and IAAF…RAKA.

It belongs to the BABAM2 family. Component of the ARISC complex, at least composed of UIMC1/RAP80, ABRAXAS1, BRCC3/BRCC36, BABAM2 and BABAM1/NBA1. Component of the BRCA1-A complex, at least composed of BRCA1, BARD1, UIMC1/RAP80, ABRAXAS1, BRCC3/BRCC36, BABAM2 and BABAM1/NBA1. In the BRCA1-A complex, interacts directly with ABRAXAS1, BRCC3/BRCC36 and BABAM1/NBA1. Binds polyubiquitin. Component of the BRISC complex, at least composed of ABRAXAS2, BRCC3/BRCC36, BABAM2 and BABAM1/NBA1. Identified in a complex with SHMT2 and the other subunits of the BRISC complex. Component of the BRCA1/BRCA2 containing complex (BRCC), which also contains BRCA1, BRCA2, BARD1, BRCC3/BRCC36 and RAD51. BRCC is a ubiquitin E3 ligase complex that enhances cellular survival following DNA damage. May interact with FAS and TNFRSF1A.

Its subcellular location is the cytoplasm. It is found in the nucleus. Component of the BRCA1-A complex, a complex that specifically recognizes 'Lys-63'-linked ubiquitinated histones H2A and H2AX at DNA lesions sites, leading to target the BRCA1-BARD1 heterodimer to sites of DNA damage at double-strand breaks (DSBs). The BRCA1-A complex also possesses deubiquitinase activity that specifically removes 'Lys-63'-linked ubiquitin on histones H2A and H2AX. In the BRCA1-A complex, it acts as an adapter that bridges the interaction between BABAM1/NBA1 and the rest of the complex, thereby being required for the complex integrity and modulating the E3 ubiquitin ligase activity of the BRCA1-BARD1 heterodimer. Component of the BRISC complex, a multiprotein complex that specifically cleaves 'Lys-63'-linked ubiquitin in various substrates. Within the BRISC complex, acts as an adapter that bridges the interaction between BABAM1/NBA1 and the rest of the complex, thereby being required for the complex integrity. The BRISC complex is required for normal mitotic spindle assembly and microtubule attachment to kinetochores via its role in deubiquitinating NUMA1. The BRISC complex plays a role in interferon signaling via its role in the deubiquitination of the interferon receptor IFNAR1; deubiquitination increases IFNAR1 activity by enhancing its stability and cell surface expression. Down-regulates the response to bacterial lipopolysaccharide (LPS) via its role in IFNAR1 deubiquitination. May play a role in homeostasis or cellular differentiation in cells of neural, epithelial and germline origins. May also act as a death receptor-associated anti-apoptotic protein, which inhibits the mitochondrial apoptotic pathway. May regulate TNF-alpha signaling through its interactions with TNFRSF1A; however these effects may be indirect. In Bos taurus (Bovine), this protein is BRISC and BRCA1-A complex member 2 (BABAM2).